A 167-amino-acid polypeptide reads, in one-letter code: uncharacterized protein (167 aa).

Residues 28-59 (LTGIREELKADIDETRLIAESVLEEKEKKVVE) adopt a coiled-coil conformation.

This is an uncharacterized protein from Aquifex aeolicus (strain VF5).